A 1870-amino-acid polypeptide reads, in one-letter code: RNA1 polyprotein (1870 aa).

Positions 486 to 654 (LEKLIELHNS…VPYNADDPCA (169 aa)) constitute an SF3 helicase domain. ATP is bound at residue 515-522 (GASGTGKT). A helical membrane pass occupies residues 910–930 (SLWCMSGDASFVAGAATVFSV). O-(5'-phospho-RNA)-serine is present on Ser937. A Peptidase C3 domain is found at 963–1165 (SSCFGDSALW…ASFMPYHASL (203 aa)). Residues His1003, Glu1039, and Cys1128 each act as for picornain 3C-like protease activity in the active site. Positions 1445-1572 (NNILCCDYSR…SVSDAISSRF (128 aa)) constitute a RdRp catalytic domain.

In terms of processing, specific enzymatic cleavages by picornain 3C-like protease in vivo yield mature proteins. Picornain 3C-like protease is autocatalytically processed. Post-translationally, uridylylated by the polymerase and is covalently linked to the 5'-end of genomic RNA. This uridylylated form acts as a nucleotide-peptide primer for the polymerase.

It is found in the host membrane. It localises to the host cytoplasm. The protein localises to the host perinuclear region. The protein resides in the host endoplasmic reticulum. The enzyme catalyses RNA(n) + a ribonucleoside 5'-triphosphate = RNA(n+1) + diphosphate. In terms of biological role, thiol protease that cleaves the RNA1 and RNA2 polyproteins. Its function is as follows. Plays a role in RNA replication. It is covalently linked to the 5'terminus of both viral single-stranded RNA1 and RNA2 molecules. Down-regulates the RNA1 polyprotein processing and enhances trans-cleavage of RNA2 polyproteins. The protease cofactor and the putative helicase seem to target the replication complexes to ER membranes. Their physical association causes the membrane rearrangement of host ER that may result in formation of the small membranous vesicles that are the site of viral RNA synthesis. Functionally, the protease cofactor and the putative helicase seem to target the replication complexes to ER membranes. Their physical association causes the membrane rearrangement of host ER that may result in formation of the small membranous vesicles that are the site of viral RNA synthesis. In terms of biological role, replicates the viral genome. This is RNA1 polyprotein from Broad bean wilt virus 2 (BBWV-2).